A 473-amino-acid chain; its full sequence is Glutamate--tRNA ligase 1 (473 aa).

The short motif at 10–20 (PSPTGFLHIGG) is the 'HIGH' region element. Residues 252–256 (KLSKR) carry the 'KMSKS' region motif. ATP is bound at residue lysine 255.

The protein belongs to the class-I aminoacyl-tRNA synthetase family. Glutamate--tRNA ligase type 1 subfamily. As to quaternary structure, monomer.

It localises to the cytoplasm. The catalysed reaction is tRNA(Glu) + L-glutamate + ATP = L-glutamyl-tRNA(Glu) + AMP + diphosphate. Its function is as follows. Catalyzes the attachment of glutamate to tRNA(Glu) in a two-step reaction: glutamate is first activated by ATP to form Glu-AMP and then transferred to the acceptor end of tRNA(Glu). The sequence is that of Glutamate--tRNA ligase 1 from Wolbachia pipientis wMel.